A 540-amino-acid chain; its full sequence is Chaperonin GroEL 1 (540 aa).

Residues 29–32, 86–90, G413, 477–479, and D493 each bind ATP; these read TLGP, DGTTT, and NAA.

The protein belongs to the chaperonin (HSP60) family. As to quaternary structure, forms a cylinder of 14 subunits composed of two heptameric rings stacked back-to-back. Interacts with the co-chaperonin GroES.

The protein localises to the cytoplasm. The catalysed reaction is ATP + H2O + a folded polypeptide = ADP + phosphate + an unfolded polypeptide.. Its function is as follows. Together with its co-chaperonin GroES, plays an essential role in assisting protein folding. The GroEL-GroES system forms a nano-cage that allows encapsulation of the non-native substrate proteins and provides a physical environment optimized to promote and accelerate protein folding. The chain is Chaperonin GroEL 1 from Salinispora arenicola (strain CNS-205).